Here is a 229-residue protein sequence, read N- to C-terminus: Apoptosis regulator Bcl-2 (229 aa).

Residues 10-30 (DNREIVMKYIHYKLSQRGYEW) carry the BH4 motif. The tract at residues 30-82 (WDAGDAGAAPPGAAPAPGILSSQPGRTPAPSRTSPPPPPAAAAGPAPSPVPPV) is disordered. Over residues 33–61 (GDAGAAPPGAAPAPGILSSQPGRTPAPSR) the composition is skewed to low complexity. Position 62 is a phosphothreonine; by MAPK8 (threonine 62). The span at 62-81 (TSPPPPPAAAAGPAPSPVPP) shows a compositional bias: pro residues. Serine 63 bears the Phosphoserine; by MAPK8 and PKC mark. At serine 77 the chain carries Phosphoserine; by MAPK8. A BH3 motif is present at residues 83 to 97 (VHLTLRQAGDDFSRR). Residues 126 to 145 (ELFRDGVNWGRIVAFFEFGG) carry the BH1 motif. The short motif at 177-192 (TWIQDNGGWDAFVELY) is the BH2 element. A helical transmembrane segment spans residues 202 to 223 (FSWLSLKALLSLALVGACITLG).

This sequence belongs to the Bcl-2 family. Forms homodimers, and heterodimers with BAX, BAD, BAK and Bcl-X(L). Heterodimerization with BAX requires intact BH1 and BH2 motifs, and is necessary for anti-apoptotic activity. Component of the complex, at least composed of LRPPRC, BECN1 and BCL2; the interactions prevent BECN1 from forming an autophagy-inducing complex with PIK3C3. Interacts with EI24. Also interacts with APAF1, BBC3, BCL2L1, BNIPL, MRPL41 and TP53BP2. Binding to FKBP8 seems to target BCL2 to the mitochondria and probably interferes with the binding of BCL2 to its targets. Interacts with BAG1 in an ATP-dependent manner. Interacts with RAF1 (the 'Ser-338' and 'Ser-339' phosphorylated form). Interacts (via the BH4 domain) with EGLN3; the interaction prevents the formation of the BAX-BCL2 complex and inhibits the anti-apoptotic activity of BCL2. Interacts with G0S2; this interaction also prevents the formation of the anti-apoptotic BAX-BCL2 complex. Interacts with RTL10/BOP. Interacts with the SCF(FBXO10) complex. Interacts (via the loop between motifs BH4 and BH3) with NLRP1 (via LRR repeats), but not with NLRP2, NLRP3, NLRP4, PYCARD, nor MEFV. Interacts with GIMAP3/IAN4, GIMAP4/IAN1 and GIMAP5/IAN5. Interacts with BCAP31. Interacts with IRF3; the interaction is inhibited by Sendai virus infection. Interacts with BECN1; thereby inhibiting autophagy in non-starvation conditions. Interacts with AMBRA1; thereby inhibiting autophagy. In terms of processing, phosphorylation/dephosphorylation on Ser-63 regulates anti-apoptotic activity. Growth factor-stimulated phosphorylation on Ser-63 by PKC is required for the anti-apoptosis activity and occurs during the G2/M phase of the cell cycle. In the absence of growth factors, BCL2 appears to be phosphorylated by other protein kinases such as ERKs and stress-activated kinases. Phosphorylated by MAPK8/JNK1 at Thr-62, Ser-63 and Ser-77, which stimulates starvation-induced autophagy. Dephosphorylated by protein phosphatase 2A (PP2A). Post-translationally, proteolytically cleaved by caspases during apoptosis. The cleaved protein, lacking the BH4 motif, has pro-apoptotic activity, causes the release of cytochrome c into the cytosol promoting further caspase activity. Monoubiquitinated by PRKN, leading to an increase in its stability. Ubiquitinated by SCF(FBXO10), leading to its degradation by the proteasome.

The protein resides in the mitochondrion outer membrane. It localises to the nucleus membrane. Its subcellular location is the endoplasmic reticulum membrane. It is found in the cytoplasm. In terms of biological role, suppresses apoptosis in a variety of cell systems including factor-dependent lymphohematopoietic and neural cells. Regulates cell death by controlling the mitochondrial membrane permeability. Appears to function in a feedback loop system with caspases. Inhibits caspase activity either by preventing the release of cytochrome c from the mitochondria and/or by binding to the apoptosis-activating factor (APAF-1). Also acts as an inhibitor of autophagy: interacts with BECN1 and AMBRA1 during non-starvation conditions and inhibits their autophagy function. May attenuate inflammation by impairing NLRP1-inflammasome activation, hence CASP1 activation and IL1B release. This chain is Apoptosis regulator Bcl-2 (BCL2), found in Bos taurus (Bovine).